An 862-amino-acid chain; its full sequence is Valine--tRNA ligase (862 aa).

A 'HIGH' region motif is present at residues 43 to 53 (PTVSGALHVGH). The segment at 459 to 494 (ERPILPDDAALPVDPSSDTPTGYHDSQRHQPGGFMA) is disordered. Positions 574–578 (KMSKS) match the 'KMSKS' region motif. ATP is bound at residue Lys577.

The protein belongs to the class-I aminoacyl-tRNA synthetase family. ValS type 2 subfamily. As to quaternary structure, monomer.

The protein resides in the cytoplasm. The catalysed reaction is tRNA(Val) + L-valine + ATP = L-valyl-tRNA(Val) + AMP + diphosphate. Catalyzes the attachment of valine to tRNA(Val). As ValRS can inadvertently accommodate and process structurally similar amino acids such as threonine, to avoid such errors, it has a 'posttransfer' editing activity that hydrolyzes mischarged Thr-tRNA(Val) in a tRNA-dependent manner. This is Valine--tRNA ligase from Salinispora arenicola (strain CNS-205).